A 161-amino-acid chain; its full sequence is Heme transporter hrg-6 (161 aa).

Helical transmembrane passes span 13-33 (IAYT…YIFA), 38-58 (VALA…YFYL), 75-95 (VLFW…ITAI), and 115-135 (WWST…NAFI).

The protein belongs to the HRG family.

The protein resides in the membrane. Its function is as follows. Heme transporter. The sequence is that of Heme transporter hrg-6 (hrg-6) from Caenorhabditis elegans.